A 367-amino-acid chain; its full sequence is 7,8-didemethyl-8-hydroxy-5-deazariboflavin synthase (367 aa).

The 237-residue stretch at 39 to 275 (LTFARNVFVP…AEVGVQVPPN (237 aa)) folds into the Radical SAM core domain. Residues Cys-53, Cys-57, and Cys-60 each coordinate [4Fe-4S] cluster.

The protein belongs to the radical SAM superfamily. CofG family. Consists of two subunits, CofG and CofH. The cofactor is [4Fe-4S] cluster.

It carries out the reaction 5-amino-5-(4-hydroxybenzyl)-6-(D-ribitylimino)-5,6-dihydrouracil + S-adenosyl-L-methionine = 7,8-didemethyl-8-hydroxy-5-deazariboflavin + 5'-deoxyadenosine + L-methionine + NH4(+) + H(+). Its pathway is cofactor biosynthesis; coenzyme F0 biosynthesis. In terms of biological role, catalyzes the radical-mediated synthesis of 7,8-didemethyl-8-hydroxy-5-deazariboflavin from 5-amino-5-(4-hydroxybenzyl)-6-(D-ribitylimino)-5,6-dihydrouracil. The polypeptide is 7,8-didemethyl-8-hydroxy-5-deazariboflavin synthase (Halobacterium salinarum (strain ATCC 29341 / DSM 671 / R1)).